We begin with the raw amino-acid sequence, 251 residues long: Adenosylcobinamide-GDP ribazoletransferase (251 aa).

A run of 5 helical transmembrane segments spans residues 44–64 (LVGL…LLAG), 114–134 (IGAF…VLAH), 143–163 (GALV…AACV), 177–197 (AGAT…TGVA), and 198–218 (LAGP…VVWL).

This sequence belongs to the CobS family. Mg(2+) serves as cofactor.

The protein localises to the cell inner membrane. The enzyme catalyses alpha-ribazole + adenosylcob(III)inamide-GDP = adenosylcob(III)alamin + GMP + H(+). The catalysed reaction is alpha-ribazole 5'-phosphate + adenosylcob(III)inamide-GDP = adenosylcob(III)alamin 5'-phosphate + GMP + H(+). The protein operates within cofactor biosynthesis; adenosylcobalamin biosynthesis; adenosylcobalamin from cob(II)yrinate a,c-diamide: step 7/7. Functionally, joins adenosylcobinamide-GDP and alpha-ribazole to generate adenosylcobalamin (Ado-cobalamin). Also synthesizes adenosylcobalamin 5'-phosphate from adenosylcobinamide-GDP and alpha-ribazole 5'-phosphate. The protein is Adenosylcobinamide-GDP ribazoletransferase of Nitratidesulfovibrio vulgaris (strain DSM 19637 / Miyazaki F) (Desulfovibrio vulgaris).